The primary structure comprises 747 residues: MRVLVLLACLAAASASAISGGYGTMVFTKEPMVNLDMKMKELCIMKLLDHILQPTMFEDIKEIAKEYNIEKSCDKYMNVDVVKQFMEMYKMGMLPRGETFVHTNELQMEEAVKVFRVLYYAKDFDVFMRTACWMRERINGGMFVYAFTAACFHRTDCKGLYLPAPYEIYPYFFVDSHVISKAFMMKMTKAAKDPVLWKYYGITVTDDNLVVIDWRKGVRRSLSQNDVMSYFMEDVDLNTYMYYLHMNYPFWMTDDAYGINKERRGEIMMYANQQLLARMRLERLSHKMCDVKPMMWNEPLETGYWPKIRLPSGDEMPVRQNNMVVATKDNLKMKQMMDDVEMMIREGILTGKIERRDGTVISLKKSEDIENLARLVLGGLEIVGDDAKVIHLTNLMKKMLSYGQYNMDKYTYVPTSLDMYTTCLRDPVFWMIMKRVCNIFTVFKNMLPKYTREQFSFPGVKVEKITTDELVTFVDEYDMDISNAMYLDATEMQNKTSDMTFMARMRRLNHHPFQVSIDVMSDKTVDAVVRIFLGPKYDCMGRLMSVNDKRLDMFELDSFMYKLVNGKNTIVRSSMDMQGFIPEYLSTRRVMESEMMPSGDGQTMVKDWWCKSRNGFPQRLMLPLGTIGGLEMQMYVIVSPVRTGMLLPTLDMTMMKDRCACRWSSCISTMPLGYPFDRPIDMASFFTSNMKFADVMIYRKDLGMSNTSKTVDTSEMVMMKDDLTYLDSDMLVKRTYKDVMMMSSMMN.

Positions 1–15 are cleaved as a signal peptide; the sequence is MRVLVLLACLAAASA. N-linked (GlcNAc...) asparagine glycans are attached at residues Asn494 and Asn706.

This sequence belongs to the hemocyanin family. Fat body.

The protein resides in the secreted. Its subcellular location is the extracellular space. Functionally, larval storage protein (LSP) which may serve as a store of amino acids for synthesis of adult proteins. This chain is Sex-specific storage-protein 1 (SP1), found in Bombyx mori (Silk moth).